We begin with the raw amino-acid sequence, 338 residues long: Tripartite motif-containing protein 44 (338 aa).

Disordered stretches follow at residues 1 to 25 (MASG…EPDE) and 72 to 162 (ARGD…EFDP). The span at 95 to 162 (EAGEGIESEE…ETEAESEFDP (68 aa)) shows a compositional bias: acidic residues. Positions 109–153 (EEESETEEESEDESEEDSEEEMEDEQESEAEEDNQEEGESEAEGE) form a coiled coil. A B box-type zinc finger spans residues 171 to 212 (VAKRKCPDHGLDLSTYCQEDKQLICVLCPVIGAHHGHHLSTL). Zn(2+)-binding residues include cysteine 176, histidine 179, cysteine 198, and histidine 204. The stretch at 257–322 (QQEFKKVQKV…QLDTSNESAE (66 aa)) forms a coiled coil. The disordered stretch occupies residues 307 to 338 (MAQAKEQLDTSNESAEPKAEGDEEEPGGTDED). Residues 327–338 (GDEEEPGGTDED) are compositionally biased toward acidic residues.

As to quaternary structure, interacts (via coiled coil) with TRIM17 (via coiled coil).

May play a role in the process of differentiation and maturation of neuronal cells. May regulate the activity of TRIM17. Is a negative regulator of PAX6 expression. The sequence is that of Tripartite motif-containing protein 44 (TRIM44) from Bos taurus (Bovine).